The following is a 142-amino-acid chain: Ribosome maturation factor RimP (142 aa).

This sequence belongs to the RimP family.

Its subcellular location is the cytoplasm. Required for maturation of 30S ribosomal subunits. The polypeptide is Ribosome maturation factor RimP (Sulfurovum sp. (strain NBC37-1)).